A 1879-amino-acid polypeptide reads, in one-letter code: Protein TIC 214 (1879 aa).

6 helical membrane-spanning segments follow: residues 18–38, 64–84, 87–107, 124–144, 172–192, and 218–238; these read IINS…FSIG, FITG…HLAL, PYTI…WTNP, LSIQ…HFIL, VGWL…LVWI, and IAPI…GRIP. 2 disordered regions span residues 245–305 and 586–702; these read ETSK…IDET and ISTS…DEPM. 2 stretches are compositionally biased toward acidic residues: residues 253–268 and 295–305; these read AETE…EIET and EKEDPDKIDET. Low complexity predominate over residues 586 to 688; sequence ISTSTPTSTP…SIPASTSTST (103 aa). Residues 691-701 show a composition bias toward basic and acidic residues; that stretch reads IKSKDEPKDEP.

This sequence belongs to the TIC214 family. Part of the Tic complex.

It is found in the plastid. It localises to the chloroplast inner membrane. Functionally, involved in protein precursor import into chloroplasts. May be part of an intermediate translocation complex acting as a protein-conducting channel at the inner envelope. In Cucumis sativus (Cucumber), this protein is Protein TIC 214.